The chain runs to 297 residues: MMIKQYLQVTKPGIIFGNLISVIGGFLLAAKGQIDYALFLATLLGVSLVVASGCVFNNYIDRDIDRKMERTKNRVLVKGLISPKVSLVYATVLGIAGFALLYLAANPLAMWLAVMGFVVYVGVYSLYMKRKSVYGTLIGSLSGAAPPVIGYCAVSDGFDTGALILLLIFSLWQMPHSYAIAIFRFKDYQAASIPVLPVKRGISVTKHHITLYIIGFMVATLMLTLSGYAGYKYLIVAASVSVWWLGMALQGYKSANDDKVWARKLFIFSIVAINSLSVMMSVDFMVPSANNLLTYLG.

A run of 9 helical transmembrane segments spans residues 12-32, 36-56, 85-105, 108-128, 133-153, 163-183, 209-229, 230-250, and 266-286; these read PGII…AAKG, YALF…GCVF, VSLV…YLAA, LAMW…SLYM, VYGT…GYCA, LILL…IAIF, ITLY…SGYA, GYKY…MALQ, and FIFS…DFMV.

Belongs to the UbiA prenyltransferase family. Protoheme IX farnesyltransferase subfamily.

It localises to the cell inner membrane. The catalysed reaction is heme b + (2E,6E)-farnesyl diphosphate + H2O = Fe(II)-heme o + diphosphate. The protein operates within porphyrin-containing compound metabolism; heme O biosynthesis; heme O from protoheme: step 1/1. Converts heme B (protoheme IX) to heme O by substitution of the vinyl group on carbon 2 of heme B porphyrin ring with a hydroxyethyl farnesyl side group. The chain is Protoheme IX farnesyltransferase from Sodalis glossinidius (strain morsitans).